The sequence spans 932 residues: RNA-binding protein 12 (932 aa).

Residues 97–116 (IPPANASRSGPPPSSGMSGR) are disordered. Low complexity predominate over residues 98–116 (PPANASRSGPPPSSGMSGR). In terms of domain architecture, RRM 1 spans 304 to 379 (LYVSVHGMPF…RYVEVSPATE (76 aa)). Ser352 and Ser375 each carry phosphoserine. 2 stretches are compositionally biased toward polar residues: residues 392-401 (KQNMGPSGQT) and 408-417 (LPRSKSPSGQ). The tract at residues 392–424 (KQNMGPSGQTHPPPQTLPRSKSPSGQKRSRSRS) is disordered. Phosphoserine occurs at positions 420, 422, and 424. In terms of domain architecture, RRM 2 spans 430–507 (FCVYLKGLPF…RFIQVHPITK (78 aa)). Ser525 carries the phosphoserine modification. Low complexity predominate over residues 717–734 (NGPPFNFPGNFGGSNAFG). Positions 717-855 (NGPPFNFPGN…PGFASSSGKP (139 aa)) are disordered. Positions 783 to 811 (SGFGGGPQNFGNGPGSLGGPPGFGSGPPG) are enriched in gly residues. The segment covering 824 to 838 (AFGPGPGPGPGPGPG) has biased composition (pro residues). The RRM 3 domain maps to 856-932 (GPTVIKVQNM…PIGSRKVNLY (77 aa)).

The protein resides in the nucleus. The chain is RNA-binding protein 12 (RBM12) from Pongo abelii (Sumatran orangutan).